The following is a 29-amino-acid chain: Potassium channel toxin alpha-KTx 3.15 (29 aa).

A disulfide bridge connects residues cysteine 8 and cysteine 27.

The protein belongs to the short scorpion toxin superfamily. Potassium channel inhibitor family. Alpha-KTx 03 subfamily. As to expression, expressed by the venom gland.

It localises to the secreted. Its function is as follows. May play a role in blocking voltage-gated potassium channels Kv1.1/KCNA1, Kv1.3/KCNA3 and Kv1.6/KCNA6. The chain is Potassium channel toxin alpha-KTx 3.15 from Mesobuthus gibbosus (Mediterranean checkered scorpion).